A 778-amino-acid polypeptide reads, in one-letter code: Pentatricopeptide repeat-containing protein At3g09650, chloroplastic (778 aa).

The transit peptide at 1-65 (MNILRPPTSS…RSASGTANSS (65 aa)) directs the protein to the chloroplast. PPR repeat units follow at residues 235–269 (DTAAFNAVLNACANLGDTDKYWKLFEEMSEWDCEP), 270–304 (DVLTYNVMIKLCARVGRKELIVFVLERIIDKGIKV), and 305–339 (CMTTMHSLVAAYVGFGDLRTAERIVQAMREKRRDL). The interval 351–381 (LKEKEEEEAEDDEDAFEDDEDSGYSARDEVS) is disordered. A compositionally biased stretch (acidic residues) spans 355–372 (EEEEAEDDEDAFEDDEDS). PPR repeat units lie at residues 413-443 (DSRIYTTLMKGYMKNGRVADTARMLEAMRRQ), 451-485 (DEVTYTTVVSAFVNAGLMDRARQVLAEMARMGVPA), 486-521 (NRITYNVLLKGYCKQLQIDRAEDLLREMTEDAGIEP), 522-556 (DVVSYNIIIDGCILIDDSAGALAFFNEMRTRGIAP), 557-587 (TKISYTTLMKAFAMSGQPKLANRVFDEMMND), 593-627 (DLIAWNMLVEGYCRLGLIEDAQRVVSRMKENGFYP), and 628-658 (NVATYGSLANGVSQARKPGDALLLWKEIKER).

This sequence belongs to the PPR family. P subfamily.

Its subcellular location is the plastid. The protein resides in the chloroplast stroma. Its function is as follows. Involved in the processing of polycistronic chloroplast psbB-psbT-psbH-petB-petD transcript. Could bind RNA. The protein is Pentatricopeptide repeat-containing protein At3g09650, chloroplastic (HCF152) of Arabidopsis thaliana (Mouse-ear cress).